A 1409-amino-acid polypeptide reads, in one-letter code: DNA-directed RNA polymerase subunit beta' (1409 aa).

Residues C72, C74, C87, and C90 each contribute to the Zn(2+) site. Mg(2+)-binding residues include D462, D464, and D466. The Zn(2+) site is built by C816, C890, C897, and C900.

Belongs to the RNA polymerase beta' chain family. As to quaternary structure, the RNAP catalytic core consists of 2 alpha, 1 beta, 1 beta' and 1 omega subunit. When a sigma factor is associated with the core the holoenzyme is formed, which can initiate transcription. It depends on Mg(2+) as a cofactor. Zn(2+) serves as cofactor.

The enzyme catalyses RNA(n) + a ribonucleoside 5'-triphosphate = RNA(n+1) + diphosphate. Its function is as follows. DNA-dependent RNA polymerase catalyzes the transcription of DNA into RNA using the four ribonucleoside triphosphates as substrates. The sequence is that of DNA-directed RNA polymerase subunit beta' from Aromatoleum aromaticum (strain DSM 19018 / LMG 30748 / EbN1) (Azoarcus sp. (strain EbN1)).